The sequence spans 236 residues: MPAYKRILLKLSGEALMGDDAFGINHATIVRMVEEIAEVTRMGVQVAVVIGGGNIFRGVAGGSVGMDRATADYMGMLATVMNALALGDTMDKAGLIARVMSAIGIERVVEPYVRPKALQYLEEGKVVIFAAGTGNPFFTTDTAAALRGAEIGAEIVLKATKVDGVYTADPKKDPRATRYTNITFDEAMGKNLEVMDATAFALCRDQKLPIKVFSIFKHGALKRVVQGEDEGTLVHV.

Residue 10–13 (KLSG) coordinates ATP. Glycine 52 contacts UMP. ATP contacts are provided by glycine 53 and arginine 57. Residues aspartate 72 and 133-140 (TGNPFFTT) each bind UMP. ATP contacts are provided by threonine 160, tyrosine 166, and aspartate 169.

Belongs to the UMP kinase family. Homohexamer.

The protein resides in the cytoplasm. It catalyses the reaction UMP + ATP = UDP + ADP. Its pathway is pyrimidine metabolism; CTP biosynthesis via de novo pathway; UDP from UMP (UMPK route): step 1/1. With respect to regulation, inhibited by UTP. Its function is as follows. Catalyzes the reversible phosphorylation of UMP to UDP. The sequence is that of Uridylate kinase from Polaromonas sp. (strain JS666 / ATCC BAA-500).